We begin with the raw amino-acid sequence, 108 residues long: UPF0060 membrane protein SA2130 (108 aa).

Transmembrane regions (helical) follow at residues 5–25 (IFIF…IWLW), 31–51 (SSLV…IATF), 60–80 (VYAA…MVVD), and 86–106 (KYDV…LLPS).

Belongs to the UPF0060 family.

Its subcellular location is the cell membrane. This Staphylococcus aureus (strain N315) protein is UPF0060 membrane protein SA2130.